The following is a 425-amino-acid chain: MLELLYTALLYLIQPLIWIRLWVRGRKAPAYRKRWGERYGFYRHPLKPGGIMLHSVSVGETLAAIPLVRALRHRYPDLPITVTTMTPTGSERVQSAFGKDVQHVYLPYDLPDALNRFLNKVDPKLVLIMETELWPNLIAALHKRKIPLVIANARLSARSAAGYAKLGKFVRRLLRRITLIAAQNEEDGARFVALGAKNNQVTVTGSLKFDISVTPQLAAKAVTLRRQWAPHRPVWIATSTHEGEESVVIAAHQALLQQFPNLLLILVPRHPERFPDAINLVRQAGLSYITRSSGEVPSTSTQVVVGDTMGELMLLYGIADLAFVGGSLVERGGHNPLEAAAHAIPVLMGPHTFNFKDICARLEQASGLITVTDATTLAKEVSSLLTDADYRSFYGRHAVEVLYQNQGALQRLLQLLEPYLPPKTH.

Residues 3–23 form a helical; Signal-anchor membrane-spanning segment; that stretch reads ELLYTALLYLIQPLIWIRLWV. Catalysis depends on glutamate 60, which acts as the Proton acceptor. CMP-binding positions include 268-269, 309-311, and 335-338; these read PR, MGE, and NPLE.

Belongs to the glycosyltransferase group 1 family. Glycosyltransferase 30 subfamily.

It is found in the cell inner membrane. It catalyses the reaction lipid IVA (E. coli) + CMP-3-deoxy-beta-D-manno-octulosonate = alpha-Kdo-(2-&gt;6)-lipid IVA (E. coli) + CMP + H(+). The catalysed reaction is alpha-Kdo-(2-&gt;6)-lipid IVA (E. coli) + CMP-3-deoxy-beta-D-manno-octulosonate = alpha-Kdo-(2-&gt;4)-alpha-Kdo-(2-&gt;6)-lipid IVA (E. coli) + CMP + H(+). Its pathway is glycolipid biosynthesis; KDO(2)-lipid A biosynthesis; KDO(2)-lipid A from CMP-3-deoxy-D-manno-octulosonate and lipid IV(A): step 1/4. The protein operates within glycolipid biosynthesis; KDO(2)-lipid A biosynthesis; KDO(2)-lipid A from CMP-3-deoxy-D-manno-octulosonate and lipid IV(A): step 2/4. It functions in the pathway bacterial outer membrane biogenesis; LPS core biosynthesis. In terms of biological role, involved in lipopolysaccharide (LPS) biosynthesis. Catalyzes the transfer of two 3-deoxy-D-manno-octulosonate (Kdo) residues from CMP-Kdo to lipid IV(A), the tetraacyldisaccharide-1,4'-bisphosphate precursor of lipid A. This chain is 3-deoxy-D-manno-octulosonic acid transferase (waaA), found in Escherichia coli O157:H7.